The sequence spans 310 residues: MSQQLKKRAKTRHQKGLGGRAPSGAKPRQGKSSQDLQAEIEPVSAVWALCDGYVCYEPGPQALGGDDFSDCYIECVIRGEFSQPILEEDSLFESLEYLKKGSEQQLSQKVFEASSLECSLEYMKKGVKKELPQKIVGENSLEYSEYMTGKKLPPGGIPGIDLSDPKQLAEFARKKPPINKEYDSLSAIACPQSGCTRKLRNRAALRKHLLIHGPRDHVCAECGKAFVESSKLKRHFLVHTGEKPFRCTFEGCGKRFSLDFNLRTHVRIHTGEKRFVCPFQGCNRRFIQSNNLKAHILTHANTNKNEQEGK.

A compositionally biased stretch (basic residues) spans 1 to 15; sequence MSQQLKKRAKTRHQK. The segment at 1 to 35 is disordered; the sequence is MSQQLKKRAKTRHQKGLGGRAPSGAKPRQGKSSQD. C2H2-type zinc fingers lie at residues 188–212, 217–239, 245–269, and 275–299; these read IACP…LLIH, HVCA…FLVH, FRCT…VRIH, and FVCP…ILTH. Residues K231 and K233 each participate in a glycyl lysine isopeptide (Lys-Gly) (interchain with G-Cter in ubiquitin) cross-link.

The protein belongs to the krueppel C2H2-type zinc-finger protein family. Polyubiquitinated by RNF12, leading to proteasomal degradation. In terms of tissue distribution, expressed in kidney, epidermal keratinocytes, prostate epithelial cells, bronchial and small airway lung epithelial cells (at protein level). Expressed in malignant kidney and several carcinoma cell lines (at protein level). Expressed in embryonic stem cells, kidney, epidermal keratinocytes, prostate epithelial cells, bronchial and small airway lung epithelial cells. Expressed in embryonal carcinomas, seminomas, malignant kidney and several carcinoma cell lines.

The protein resides in the nucleus. Involved in the reprogramming of X-chromosome inactivation during the acquisition of pluripotency. Required for efficient elongation of TSIX, a non-coding RNA antisense to XIST. Binds DXPas34 enhancer within the TSIX promoter. Involved in ES cell self-renewal. This chain is Zinc finger protein 42 homolog (ZFP42), found in Homo sapiens (Human).